A 373-amino-acid chain; its full sequence is tRNA-specific 2-thiouridylase MnmA (373 aa).

ATP contacts are provided by residues glycine 12 to serine 19 and methionine 38. The interaction with target base in tRNA stretch occupies residues asparagine 98–aspartate 100. Cysteine 103 acts as the Nucleophile in catalysis. An intrachain disulfide couples cysteine 103 to cysteine 200. Residue glycine 127 coordinates ATP. The segment at lysine 150–glutamine 152 is interaction with tRNA. The active-site Cysteine persulfide intermediate is the cysteine 200. The segment at arginine 312–tyrosine 313 is interaction with tRNA.

The protein belongs to the MnmA/TRMU family.

It localises to the cytoplasm. The catalysed reaction is S-sulfanyl-L-cysteinyl-[protein] + uridine(34) in tRNA + AH2 + ATP = 2-thiouridine(34) in tRNA + L-cysteinyl-[protein] + A + AMP + diphosphate + H(+). Catalyzes the 2-thiolation of uridine at the wobble position (U34) of tRNA, leading to the formation of s(2)U34. This Streptococcus agalactiae serotype Ia (strain ATCC 27591 / A909 / CDC SS700) protein is tRNA-specific 2-thiouridylase MnmA.